We begin with the raw amino-acid sequence, 113 residues long: Dolichyl-diphosphooligosaccharide--protein glycosyltransferase subunit DAD1 (113 aa).

Position 2 is an N-acetylserine (serine 2). Residues serine 2–tyrosine 30 are Cytoplasmic-facing. A helical transmembrane segment spans residues leucine 31–phenylalanine 51. A topological domain (lumenal) is located at residue proline 52. Residues phenylalanine 53–leucine 73 traverse the membrane as a helical segment. Over arginine 74–arginine 92 the chain is Cytoplasmic. A helical membrane pass occupies residues alanine 93–glycine 113.

Belongs to the DAD/OST2 family. Component of the oligosaccharyltransferase (OST) complex. OST exists in two different complex forms which contain common core subunits RPN1, RPN2, OST48, OST4, DAD1 and TMEM258, either STT3A or STT3B as catalytic subunits, and form-specific accessory subunits. STT3A complex assembly occurs through the formation of 3 subcomplexes. Subcomplex 1 contains RPN1 and TMEM258, subcomplex 2 contains the STT3A-specific subunits STT3A, DC2/OSTC, and KCP2 as well as the core subunit OST4, and subcomplex 3 contains RPN2, DAD1, and OST48. The STT3A complex can form stable complexes with the Sec61 complex or with both the Sec61 and TRAP complexes.

Its subcellular location is the endoplasmic reticulum membrane. Its pathway is protein modification; protein glycosylation. Its function is as follows. Subunit of the oligosaccharyl transferase (OST) complex that catalyzes the initial transfer of a defined glycan (Glc(3)Man(9)GlcNAc(2) in eukaryotes) from the lipid carrier dolichol-pyrophosphate to an asparagine residue within an Asn-X-Ser/Thr consensus motif in nascent polypeptide chains, the first step in protein N-glycosylation. N-glycosylation occurs cotranslationally and the complex associates with the Sec61 complex at the channel-forming translocon complex that mediates protein translocation across the endoplasmic reticulum (ER). All subunits are required for a maximal enzyme activity. This Pongo abelii (Sumatran orangutan) protein is Dolichyl-diphosphooligosaccharide--protein glycosyltransferase subunit DAD1.